Here is a 503-residue protein sequence, read N- to C-terminus: Cytochrome P450 714C1 (503 aa).

The Lumenal segment spans residues 1–6; it reads MEKLLA. The helical; Signal-anchor for type III membrane protein transmembrane segment at 7-27 threads the bilayer; sequence LIVVLVILLSLALFYLCNILW. Residues 28-503 are Cytoplasmic-facing; it reads LRAVKIRKKL…GLPLMVTKLP (476 aa). Cys450 lines the heme pocket.

This sequence belongs to the cytochrome P450 family. Heme serves as cofactor.

It is found in the membrane. Functionally, probably not involved in gibberellin metabolism since over-expression of CYP714C1 in a heterologous system does not induce semi-dwarfism. The protein is Cytochrome P450 714C1 (CYP714C1) of Oryza sativa subsp. japonica (Rice).